Here is a 408-residue protein sequence, read N- to C-terminus: Centromere protein U (408 aa).

Over residues Asp1–Arg33 the composition is skewed to basic residues. Residues Asp1–Thr218 are disordered. At Thr72 the chain carries Phosphothreonine; by PLK1. Residue Thr92 is modified to Phosphothreonine. The span at Gln94 to Asp103 shows a compositional bias: basic and acidic residues. At Ser102 the chain carries Phosphoserine. Position 104 is a phosphothreonine (Thr104). A phosphoserine mark is found at Ser105, Ser110, and Ser114. Positions Ser118 to Lys127 are enriched in basic residues. Phosphoserine occurs at positions 130, 133, and 135. Residues Pro176–Ser186 show a composition bias toward polar residues. Lys178 is covalently cross-linked (Glycyl lysine isopeptide (Lys-Gly) (interchain with G-Cter in SUMO2)). Residues Ser183 and Ser187 each carry the phosphoserine modification. A Phosphothreonine modification is found at Thr192. Position 222 is a phosphoserine (Ser222). Residues Ser273–Asn350 adopt a coiled-coil conformation. Positions Lys293–Leu310 match the Nuclear localization signal motif.

Belongs to the CENP-U/AME1 family. In terms of assembly, component of the CENPA-NAC complex, at least composed of CENPA, CENPC, CENPH, CENPM, CENPN, CENPT and CENPU. The CENPA-NAC complex interacts with the CENPA-CAD complex, composed of CENPI, CENPK, CENPL, CENPO, CENPP, CENPQ, CENPR and CENPS. Interacts with MLF1. Phosphorylated by PLK1 at Thr-72, creating a self-tethering site that specifically interacts with the polo-box domain of PLK1.

It is found in the cytoplasm. Its subcellular location is the nucleus. It localises to the chromosome. The protein resides in the centromere. The protein localises to the kinetochore. In terms of biological role, component of the CENPA-NAC (nucleosome-associated) complex, a complex that plays a central role in assembly of kinetochore proteins, mitotic progression and chromosome segregation. The CENPA-NAC complex recruits the CENPA-CAD (nucleosome distal) complex and may be involved in incorporation of newly synthesized CENPA into centromeres. Plays an important role in the correct PLK1 localization to the mitotic kinetochores. A scaffold protein responsible for the initial recruitment and maintenance of the kinetochore PLK1 population until its degradation. Involved in transcriptional repression. This is Centromere protein U (CENPU) from Bos taurus (Bovine).